Reading from the N-terminus, the 97-residue chain is Aspartyl/glutamyl-tRNA(Asn/Gln) amidotransferase subunit C (97 aa).

This sequence belongs to the GatC family. Heterotrimer of A, B and C subunits.

It catalyses the reaction L-glutamyl-tRNA(Gln) + L-glutamine + ATP + H2O = L-glutaminyl-tRNA(Gln) + L-glutamate + ADP + phosphate + H(+). The catalysed reaction is L-aspartyl-tRNA(Asn) + L-glutamine + ATP + H2O = L-asparaginyl-tRNA(Asn) + L-glutamate + ADP + phosphate + 2 H(+). Functionally, allows the formation of correctly charged Asn-tRNA(Asn) or Gln-tRNA(Gln) through the transamidation of misacylated Asp-tRNA(Asn) or Glu-tRNA(Gln) in organisms which lack either or both of asparaginyl-tRNA or glutaminyl-tRNA synthetases. The reaction takes place in the presence of glutamine and ATP through an activated phospho-Asp-tRNA(Asn) or phospho-Glu-tRNA(Gln). This Synechococcus sp. (strain CC9311) protein is Aspartyl/glutamyl-tRNA(Asn/Gln) amidotransferase subunit C.